A 341-amino-acid chain; its full sequence is UDP-3-O-acylglucosamine N-acyltransferase (341 aa).

The Proton acceptor role is filled by H241.

It belongs to the transferase hexapeptide repeat family. LpxD subfamily. In terms of assembly, homotrimer.

It catalyses the reaction a UDP-3-O-[(3R)-3-hydroxyacyl]-alpha-D-glucosamine + a (3R)-hydroxyacyl-[ACP] = a UDP-2-N,3-O-bis[(3R)-3-hydroxyacyl]-alpha-D-glucosamine + holo-[ACP] + H(+). It participates in bacterial outer membrane biogenesis; LPS lipid A biosynthesis. Its function is as follows. Catalyzes the N-acylation of UDP-3-O-acylglucosamine using 3-hydroxyacyl-ACP as the acyl donor. Is involved in the biosynthesis of lipid A, a phosphorylated glycolipid that anchors the lipopolysaccharide to the outer membrane of the cell. The sequence is that of UDP-3-O-acylglucosamine N-acyltransferase from Histophilus somni (strain 129Pt) (Haemophilus somnus).